An 876-amino-acid chain; its full sequence is Leucine--tRNA ligase (876 aa).

A 'HIGH' region motif is present at residues 43–53 (PYPSGRIHMGH). A 'KMSKS' region motif is present at residues 632–636 (KMSKS). Lys635 contacts ATP.

The protein belongs to the class-I aminoacyl-tRNA synthetase family.

Its subcellular location is the cytoplasm. It carries out the reaction tRNA(Leu) + L-leucine + ATP = L-leucyl-tRNA(Leu) + AMP + diphosphate. The sequence is that of Leucine--tRNA ligase from Rhodopseudomonas palustris (strain ATCC BAA-98 / CGA009).